We begin with the raw amino-acid sequence, 1014 residues long: Klotho (1014 aa).

The first 35 residues, 1–35 (MPASAPPRRPRPPPPSLSLSLLLVLLGLAGRRLRA), serve as a signal peptide directing secretion. Residues 36–983 (EPGDGAQTWA…ECSFFHTRKP (948 aa)) lie on the Extracellular side of the membrane. Glycosyl hydrolase-1 regions lie at residues 59-508 (FQGT…KNGF) and 517-955 (LEGT…SNGF). N161, N285, N346, N609, N614, and N696 each carry an N-linked (GlcNAc...) asparagine glycan. A helical transmembrane segment spans residues 984–1004 (LVAFIAFLFFAFIVSLSLIFY). Residues 1005–1014 (YSKKGRRRYQ) lie on the Cytoplasmic side of the membrane.

Belongs to the glycosyl hydrolase 1 family. Klotho subfamily. As to quaternary structure, homodimer. Interacts with FGF23 and FGFR1.

The protein localises to the cell membrane. Its subcellular location is the apical cell membrane. It localises to the secreted. The catalysed reaction is a beta-D-glucuronoside + H2O = D-glucuronate + an alcohol. In terms of biological role, may have weak glycosidase activity towards glucuronylated steroids. However, it lacks essential active site Glu residues at positions 241 and 874, suggesting it may be inactive as a glycosidase in vivo. May be involved in the regulation of calcium and phosphorus homeostasis by inhibiting the synthesis of active vitamin D. Essential factor for the specific interaction between FGF23 and FGFR1. Functionally, the Klotho peptide generated by cleavage of the membrane-bound isoform may be an anti-aging circulating hormone which would extend life span by inhibiting insulin/IGF1 signaling. The protein is Klotho (KL) of Macaca fascicularis (Crab-eating macaque).